A 388-amino-acid polypeptide reads, in one-letter code: Oxytocin receptor (388 aa).

Positions 1–32 (MEGTPAANWSVELDLGSGVPPGEEGNRTAGPP) are disordered. Residues 1–38 (MEGTPAANWSVELDLGSGVPPGEEGNRTAGPPQRNEAL) are Extracellular-facing. N-linked (GlcNAc...) asparagine glycosylation is found at N8 and N26. Residues 39-63 (ARVEVAVLCLILFLALSGNACVLLA) traverse the membrane as a helical segment. The Cytoplasmic segment spans residues 64-74 (LRTTRHKHSRL). The chain crosses the membrane as a helical span at residues 75 to 97 (FFFMKHLSIADLVVAVFQVLPQL). The Extracellular portion of the chain corresponds to 98–113 (LWDITFRFYGPDLLCR). Cysteines 112 and 187 form a disulfide. A helical membrane pass occupies residues 114 to 135 (LVKYLQVVGMFASTYLLLLMSL). Residues 136–154 (DRCLAICQPLRSLRRRTDR) are Cytoplasmic-facing. Residues 155-175 (LAVLGTWLGCLVASAPQVHIF) traverse the membrane as a helical segment. The Extracellular portion of the chain corresponds to 176–202 (SLREVADGVFDCWAVFIQPWGPKAYVT). Residues 203 to 225 (WITLAVYIVPVIVLAACYGLISF) traverse the membrane as a helical segment. Over 226 to 274 (KIWQNLRLKTAAAAAAAEGNDAAGGAGRAALARVSSVKLISKAKIRTVK) the chain is Cytoplasmic. A helical membrane pass occupies residues 275 to 293 (MTFIIVLAFIVCWTPFFFV). Topologically, residues 294–308 (QMWSVWDVNAPKEAS) are extracellular. The helical transmembrane segment at 309 to 331 (AFIIAMLLASLNSCCNPWIYMLF) threads the bilayer. At 332–388 (TGHLFHELVQRFFCCSARYLKGSRPGETSVSKKSNSSTFVLSRRSSSQRSCSQPSSA) the chain is on the cytoplasmic side. The segment at 354-388 (SRPGETSVSKKSNSSTFVLSRRSSSQRSCSQPSSA) is disordered. Phosphoserine occurs at positions 365 and 367. Residues 365-388 (SNSSTFVLSRRSSSQRSCSQPSSA) are compositionally biased toward low complexity.

The protein belongs to the G-protein coupled receptor 1 family. Vasopressin/oxytocin receptor subfamily.

It is found in the cell membrane. Its function is as follows. Receptor for oxytocin. The activity of this receptor is mediated by G proteins which activate a phosphatidylinositol-calcium second messenger system. The sequence is that of Oxytocin receptor (Oxtr) from Rattus norvegicus (Rat).